A 272-amino-acid polypeptide reads, in one-letter code: Shikimate dehydrogenase (NADP(+)) (272 aa).

Shikimate-binding positions include 14–16 (SKS) and Thr-61. The active-site Proton acceptor is the Lys-65. An NADP(+)-binding site is contributed by Glu-77. Residues Asn-86 and Asp-102 each coordinate shikimate. Residues 126–130 (GAGGA), 149–154 (NRTFSR), and Met-213 contribute to the NADP(+) site. Tyr-215 serves as a coordination point for shikimate. Residue Gly-237 coordinates NADP(+).

Belongs to the shikimate dehydrogenase family. Homodimer.

The enzyme catalyses shikimate + NADP(+) = 3-dehydroshikimate + NADPH + H(+). The protein operates within metabolic intermediate biosynthesis; chorismate biosynthesis; chorismate from D-erythrose 4-phosphate and phosphoenolpyruvate: step 4/7. Functionally, involved in the biosynthesis of the chorismate, which leads to the biosynthesis of aromatic amino acids. Catalyzes the reversible NADPH linked reduction of 3-dehydroshikimate (DHSA) to yield shikimate (SA). This is Shikimate dehydrogenase (NADP(+)) from Photorhabdus laumondii subsp. laumondii (strain DSM 15139 / CIP 105565 / TT01) (Photorhabdus luminescens subsp. laumondii).